A 274-amino-acid chain; its full sequence is Glutamate--cysteine ligase regulatory subunit (274 aa).

Residue serine 59 is modified to Phosphoserine. Lysine 263 carries the N6-acetyllysine modification.

It belongs to the aldo/keto reductase family. Glutamate--cysteine ligase light chain subfamily. In terms of assembly, heterodimer of a catalytic heavy chain and a regulatory light chain. As to expression, most abundant in kidney. Also found in liver and testis.

It participates in sulfur metabolism; glutathione biosynthesis; glutathione from L-cysteine and L-glutamate: step 1/2. The sequence is that of Glutamate--cysteine ligase regulatory subunit (Gclm) from Rattus norvegicus (Rat).